The following is a 442-amino-acid chain: uncharacterized protein (442 aa).

Residues 1–238 enclose the ABC transporter domain; it reads MKAEGLSGGY…QSIKAVYDTD (238 aa). Position 33-40 (33-40) interacts with ATP; that stretch reads GPNGSGKT.

It belongs to the ABC transporter superfamily. In terms of assembly, the complex is composed of two ATP-binding proteins (YvrA), two transmembrane proteins (YvrB) and a solute-binding protein (YvrC).

Functionally, probably part of an ABC transporter complex. Probably responsible for energy coupling to the transport system. This is an uncharacterized protein from Bacillus subtilis (strain 168).